The following is a 391-amino-acid chain: Aspartic protease 17 (391 aa).

An N-terminal signal peptide occupies residues 1 to 15 (MHLIFLLFLAPFCSA). The Peptidase A1 domain maps to 65–385 (YLGNFTVGTP…DIGNARIGFA (321 aa)). Asn68 carries N-linked (GlcNAc...) asparagine glycosylation. Asp83 is an active-site residue. Asn108 is a glycosylation site (N-linked (GlcNAc...) asparagine). Residue Asp274 is part of the active site. Cys309 and Cys345 are disulfide-bonded.

Belongs to the peptidase A1 family. As to expression, expressed in intestinal cells.

Its subcellular location is the secreted. Its function is as follows. Aspartic proteinase. This is Aspartic protease 17 from Caenorhabditis elegans.